Here is a 128-residue protein sequence, read N- to C-terminus: Sulfurtransferase TusD (128 aa).

The active-site Cysteine persulfide intermediate is the cysteine 78.

It belongs to the DsrE/TusD family. In terms of assembly, heterohexamer, formed by a dimer of trimers. The hexameric TusBCD complex contains 2 copies each of TusB, TusC and TusD. The TusBCD complex interacts with TusE.

It is found in the cytoplasm. Part of a sulfur-relay system required for 2-thiolation of 5-methylaminomethyl-2-thiouridine (mnm(5)s(2)U) at tRNA wobble positions. Accepts sulfur from TusA and transfers it in turn to TusE. The chain is Sulfurtransferase TusD from Erwinia tasmaniensis (strain DSM 17950 / CFBP 7177 / CIP 109463 / NCPPB 4357 / Et1/99).